Consider the following 299-residue polypeptide: Lipoyl synthase 2 (299 aa).

Residues Cys-43, Cys-48, Cys-54, Cys-69, Cys-73, Cys-76, and Ser-294 each coordinate [4Fe-4S] cluster. A Radical SAM core domain is found at 55-283; it reads YAAGTATFLL…GAVARDLGFA (229 aa).

Belongs to the radical SAM superfamily. Lipoyl synthase family. [4Fe-4S] cluster serves as cofactor.

Its subcellular location is the cytoplasm. The catalysed reaction is [[Fe-S] cluster scaffold protein carrying a second [4Fe-4S](2+) cluster] + N(6)-octanoyl-L-lysyl-[protein] + 2 oxidized [2Fe-2S]-[ferredoxin] + 2 S-adenosyl-L-methionine + 4 H(+) = [[Fe-S] cluster scaffold protein] + N(6)-[(R)-dihydrolipoyl]-L-lysyl-[protein] + 4 Fe(3+) + 2 hydrogen sulfide + 2 5'-deoxyadenosine + 2 L-methionine + 2 reduced [2Fe-2S]-[ferredoxin]. It functions in the pathway protein modification; protein lipoylation via endogenous pathway; protein N(6)-(lipoyl)lysine from octanoyl-[acyl-carrier-protein]: step 2/2. Its function is as follows. Catalyzes the radical-mediated insertion of two sulfur atoms into the C-6 and C-8 positions of the octanoyl moiety bound to the lipoyl domains of lipoate-dependent enzymes, thereby converting the octanoylated domains into lipoylated derivatives. This chain is Lipoyl synthase 2, found in Parasynechococcus marenigrum (strain WH8102).